Reading from the N-terminus, the 312-residue chain is MESVELTLKNSNMKDKTLTGGAQNGDDFSVDDLLDFSKEEEDDDVLVEDEAELKVQRKRGVSDENTLHRSNDFSTADFHTSGLSVPMDDIAELEWLSNFVDDSSFTPYSAPTNKPVWLTGNRRHLVQPVKEETCFKSQHPAVKTRPKRARTGVRVWSHGSQSLTDSSSSSTTSSSSSPRPSSPLWLASGQFLDEPMTKTQKKKKVWKNAGQTQTQTQTQTRQCGHCGVQKTPQWRAGPLGAKTLCNACGVRYKSGRLLPEYRPACSPTFSSELHSNHHSKVIEMRRKKETSDGAEETGLNQPVQTVQVVSSF.

3 disordered regions span residues 1 to 33 (MESV…VDDL), 56 to 77 (QRKR…STAD), and 136 to 186 (KSQH…PLWL). Residues 56–71 (QRKRGVSDENTLHRSN) are compositionally biased toward basic and acidic residues. The segment covering 142-151 (VKTRPKRART) has biased composition (basic residues). The Nuclear localization signal motif lies at 143 to 150 (KTRPKRAR). Over residues 157–186 (SHGSQSLTDSSSSSTTSSSSSPRPSSPLWL) the composition is skewed to low complexity. The segment at 217–271 (QTQTRQCGHCGVQKTPQWRAGPLGAKTLCNACGVRYKSGRLLPEYRPACSPTFSS) adopts a GATA-type zinc-finger fold.

It belongs to the type IV zinc-finger family. Class A subfamily.

It is found in the nucleus. Functionally, transcriptional activator that specifically binds 5'-GATA-3' or 5'-GAT-3' motifs within gene promoters. May be involved in the regulation of some light-responsive genes. The sequence is that of GATA transcription factor 6 (GATA6) from Arabidopsis thaliana (Mouse-ear cress).